The following is a 486-amino-acid chain: Aspartyl/glutamyl-tRNA(Asn/Gln) amidotransferase subunit B (486 aa).

The protein belongs to the GatB/GatE family. GatB subfamily. Heterotrimer of A, B and C subunits.

It carries out the reaction L-glutamyl-tRNA(Gln) + L-glutamine + ATP + H2O = L-glutaminyl-tRNA(Gln) + L-glutamate + ADP + phosphate + H(+). The enzyme catalyses L-aspartyl-tRNA(Asn) + L-glutamine + ATP + H2O = L-asparaginyl-tRNA(Asn) + L-glutamate + ADP + phosphate + 2 H(+). Its function is as follows. Allows the formation of correctly charged Asn-tRNA(Asn) or Gln-tRNA(Gln) through the transamidation of misacylated Asp-tRNA(Asn) or Glu-tRNA(Gln) in organisms which lack either or both of asparaginyl-tRNA or glutaminyl-tRNA synthetases. The reaction takes place in the presence of glutamine and ATP through an activated phospho-Asp-tRNA(Asn) or phospho-Glu-tRNA(Gln). This Herminiimonas arsenicoxydans protein is Aspartyl/glutamyl-tRNA(Asn/Gln) amidotransferase subunit B.